The primary structure comprises 272 residues: Phosphate import ATP-binding protein PstB (272 aa).

The region spanning 26–267 (VAARNLNFYY…PADRRTQDYI (242 aa)) is the ABC transporter domain. 58–65 (GPSGCGKS) contributes to the ATP binding site.

The protein belongs to the ABC transporter superfamily. Phosphate importer (TC 3.A.1.7) family. The complex is composed of two ATP-binding proteins (PstB), two transmembrane proteins (PstC and PstA) and a solute-binding protein (PstS).

It is found in the cell inner membrane. It catalyses the reaction phosphate(out) + ATP + H2O = ADP + 2 phosphate(in) + H(+). In terms of biological role, part of the ABC transporter complex PstSACB involved in phosphate import. Responsible for energy coupling to the transport system. The chain is Phosphate import ATP-binding protein PstB from Nitrobacter hamburgensis (strain DSM 10229 / NCIMB 13809 / X14).